Consider the following 457-residue polypeptide: PDZ and LIM domain protein 7 (457 aa).

The PDZ domain occupies 1-85 (MDSFKVVLEG…RLSLGLSRAQ (85 aa)). Position 78 is a phosphoserine (S78). Disordered stretches follow at residues 82–166 (SRAQ…QSRS) and 186–226 (FMKK…PWAV). At T96 the chain carries Phosphothreonine. R103 carries the asymmetric dimethylarginine modification. At S111 the chain carries Phosphoserine. Polar residues predominate over residues 126-135 (DSTLRQNGQL). Over residues 144–157 (SKQRLMEDTEDWRP) the composition is skewed to basic and acidic residues. S247 carries the phosphoserine modification. 3 LIM zinc-binding domains span residues 280–338 (PVCH…VRYA), 339–398 (PNCA…MFGT), and 399–457 (KCRG…FSHV).

In terms of assembly, specifically binds via its LIM zinc-binding 3 domain (LIM 3) domain to endocytic codes of INSR, but not with those of IGF1R, LDLR, TFRC, or EGFR. Interacts with various PKC isoforms through the LIM zinc-binding domains. Binds to RET in a phosphorylation-independent manner via its LIM zinc-binding domain 2 (LIM 2). Probably part of a complex with SHC and the RET dimer. Interacts with TPM2, TBX4 and TBX5.

It is found in the cytoplasm. It localises to the cytoskeleton. May function as a scaffold on which the coordinated assembly of proteins can occur. May play a role as an adapter that, via its PDZ domain, localizes LIM-binding proteins to actin filaments of both skeletal muscle and nonmuscle tissues. Involved in both of the two fundamental mechanisms of bone formation, direct bone formation (e.g. embryonic flat bones mandible and cranium), and endochondral bone formation (e.g. embryonic long bone development). Plays a role during fracture repair. Involved in BMP6 signaling pathway. This chain is PDZ and LIM domain protein 7 (Pdlim7), found in Mus musculus (Mouse).